The following is a 563-amino-acid chain: Lipase 1 (563 aa).

The first 19 residues, 1-19 (MVSKTFFLAAALNVVGTLA), serve as a signal peptide directing secretion. Q20 carries the post-translational modification Pyrrolidone carboxylic acid. An intrachain disulfide couples C80 to C124. The Acyl-ester intermediate role is filled by S236. Cysteines 295 and 307 form a disulfide. A glycan (N-linked (GlcNAc...) asparagine) is linked at N302. E373 serves as the catalytic Charge relay system. N383 carries an N-linked (GlcNAc...) asparagine glycan. Catalysis depends on H482, which acts as the Charge relay system.

This sequence belongs to the type-B carboxylesterase/lipase family. As to quaternary structure, monomer.

Its subcellular location is the secreted. It catalyses the reaction a triacylglycerol + H2O = a diacylglycerol + a fatty acid + H(+). In terms of biological role, hydrolyzes all ester bonds in triglyceride and displays a high affinity for triolein. For unsaturated substrates having long fatty acyl chains (C18:2 cis-9, cis-12 and C18:3 cis-9, cis-12, cis-15) GCL I shows higher specific activity than GCL II, whereas GCL II shows higher specific activity against saturated substrates having short fatty acid chains (C8, C10, C12 and C14). The polypeptide is Lipase 1 (LIP1) (Geotrichum candidum (Oospora lactis)).